Here is a 71-residue protein sequence, read N- to C-terminus: MKQGIHPEYKEITVTCSCGNVIKTRSTAGHDINLDVCGNCHPFYTGKQRVVDTGGRVERFNKRFSIPGSKK.

Cysteine 16, cysteine 18, cysteine 37, and cysteine 40 together coordinate Zn(2+).

The protein belongs to the bacterial ribosomal protein bL31 family. Type A subfamily. As to quaternary structure, part of the 50S ribosomal subunit. The cofactor is Zn(2+).

Functionally, binds the 23S rRNA. This chain is Large ribosomal subunit protein bL31, found in Mannheimia succiniciproducens (strain KCTC 0769BP / MBEL55E).